Reading from the N-terminus, the 1410-residue chain is non-specific serine/threonine protein kinase (1410 aa).

The Protein kinase domain occupies 27-299 (THYVSQLNNS…LLEKYRTIYF (273 aa)). Residues 33–41 (LNNSRFLKT) and K54 contribute to the ATP site. D147 functions as the Proton acceptor in the catalytic mechanism. 5 HEAT repeats span residues 441–478 (TKLD…EVKH), 485–525 (NIFV…KANL), 556–594 (RKLQ…YFGR), 596–633 (KTND…LLGP), and 635–672 (TMEQ…TRFV). WD repeat units follow at residues 1037–1076 (FDGT…NEKS), 1187–1226 (ADYG…QIRA), and 1230–1273 (GESL…CKHV).

It belongs to the protein kinase superfamily. Ser/Thr protein kinase family. In terms of assembly, component of the autophagy-specific VPS34 PI3-kinase complex I composed of VPS15, VPS30, VPS34, ATG14 and ATG38; and of the VPS34 PI3-kinase complex II composed of VPS15, VPS30, VPS34 and VPS38. In terms of processing, autophosphorylated.

The protein localises to the golgi apparatus. The protein resides in the trans-Golgi network membrane. Its subcellular location is the endosome membrane. It catalyses the reaction L-seryl-[protein] + ATP = O-phospho-L-seryl-[protein] + ADP + H(+). It carries out the reaction L-threonyl-[protein] + ATP = O-phospho-L-threonyl-[protein] + ADP + H(+). Its function is as follows. Serine/threonine-protein kinase that plays a role in signaling in modulation of host immune response, intracellular survival and virulence. Required for impediment of phagosomal maturation in THP-1 macrophages. Regulatory subunit of the autophagy-specific VPS34 PI3-kinase complex I essential to recruit the ATG8-phosphatidylinositol conjugate and the ATG12-ATG5 conjugate to the pre-autophagosomal structure. Within the PS34 PI3-kinase complex I, VPS15-mediated phosphorylation of VPS34 may be required for recruiting VPS34 to the membrane but not for activation of its PI3K activity. Is also involved in endosome-to-Golgi retrograde transport as part of the VPS34 PI3-kinase complex II. This second complex is required for the endosome-to-Golgi retrieval of PEP1 and KEX2, and the recruitment of VPS5 and VPS7, two components of the retromer complex, to endosomal membranes (probably through the synthesis of a specific pool of phosphatidylinositol 3-phosphate recruiting the retromer to the endosomes). By regulating VPS34 kinase activity, VPS15 appears to be essential for the efficient delivery of soluble hydrolases to the yeast vacuole. The protein is non-specific serine/threonine protein kinase of Candida glabrata (strain ATCC 2001 / BCRC 20586 / JCM 3761 / NBRC 0622 / NRRL Y-65 / CBS 138) (Yeast).